An 892-amino-acid polypeptide reads, in one-letter code: Iodate reductase subunit IdrA (892 aa).

The [3Fe-4S] cluster site is built by C27, C30, and C34. Residues 431 to 442 (RGGGHQRGGLSA) are compositionally biased toward gly residues. The disordered stretch occupies residues 431-452 (RGGGHQRGGLSAGGNSEWLSPE).

Belongs to the prokaryotic molybdopterin-containing oxidoreductase family. As to quaternary structure, the iodate reductase (Idr) complex is composed of a molybdopterin-dependent iodate reductase (IdrA and IdrB subunits) and two associated peroxidases (IdrP1 and IdrP2). Requires [3Fe-4S] cluster as cofactor. The cofactor is Mo-bis(molybdopterin guanine dinucleotide).

It localises to the periplasm. Involved in iodate respiration. Probably catalyzes the reduction of iodate (IO(3)(-)) to hypoiodous acid (HIO) and H(2)O(2), using a reduced cytochrome c as the electron donor. This Pseudomonas sp. (strain SCT) protein is Iodate reductase subunit IdrA.